A 137-amino-acid polypeptide reads, in one-letter code: Large ribosomal subunit protein uL16 (137 aa).

This sequence belongs to the universal ribosomal protein uL16 family. As to quaternary structure, part of the 50S ribosomal subunit.

Its function is as follows. Binds 23S rRNA and is also seen to make contacts with the A and possibly P site tRNAs. In Solidesulfovibrio magneticus (strain ATCC 700980 / DSM 13731 / RS-1) (Desulfovibrio magneticus), this protein is Large ribosomal subunit protein uL16.